Consider the following 495-residue polypeptide: Probable aspartic-type endopeptidase OPSB (495 aa).

Positions 1–19 (MRGDSFIWSLATAIPLLST) are cleaved as a signal peptide. The region spanning 73-408 (YFCNLTLGTP…DLDNNEISIA (336 aa)) is the Peptidase A1 domain. Residue N76 is glycosylated (N-linked (GlcNAc...) asparagine). The active site involves D91. A glycan (N-linked (GlcNAc...) asparagine) is linked at N136. D290 is a catalytic residue. A glycan (N-linked (GlcNAc...) asparagine) is linked at N413. The tract at residues 448-470 (TGLPGVETGVPGSRPPSSKAAGQ) is disordered. A467 is lipidated: GPI-anchor amidated alanine. Residues 468 to 495 (AGQAKRPDFVLGVAAVGLAGAGMLFAAM) constitute a propeptide, removed in mature form.

Belongs to the peptidase A1 family.

It is found in the cell membrane. Functionally, probable GPI-anchored aspartic-type endopeptidase which contributes to virulence. This Trichophyton verrucosum (strain HKI 0517) protein is Probable aspartic-type endopeptidase OPSB (OPSB).